Consider the following 322-residue polypeptide: Solute carrier family 35 member B1 (322 aa).

A run of 8 helical transmembrane segments spans residues 12-32 (LRLPLCFLGVFVCYFYYGILQ), 51-71 (FALTLVFIQCVVNAVFAKILI), 85-105 (WLYAACSVSYLGAMVSSNSAL), 136-156 (YPMAKYLCVLLIVAGVALFMY), 168-188 (TIGYGELLLLLSLTLDGLTGV), 210-230 (LWSTLLLGAGILFTGELWEFL), 243-263 (ILLFGLTSALGQSFIFMTVVY), and 285-305 (VILFANPISPMQWVGTVLVFL). Positions 318 to 322 (KKTSH) match the Di-lysine motif motif.

It belongs to the nucleotide-sugar transporter family. SLC35B subfamily.

It is found in the endoplasmic reticulum membrane. It carries out the reaction ADP(in) + ATP(out) = ADP(out) + ATP(in). The catalysed reaction is UDP(out) + ATP(in) = UDP(in) + ATP(out). The enzyme catalyses UTP(out) + ATP(in) = UTP(in) + ATP(out). It catalyses the reaction dATP(out) + ATP(in) = dATP(in) + ATP(out). In terms of biological role, ATP:ADP antiporter that catalyzes the exchange of ATP and ADP across the endoplasmic reticulum (ER) membrane. Imports ATP from the cytosol to the ER lumen and exports ADP in the opposite direction. Regulates ER energy metabolism and protein biogenesis. Appears to be part of a calcium-dependent ER to cytosol low energy response axis, where calcium efflux from ER to the cytosol triggers ATP import into the ER lumen to maintain sufficient ATP supply. Provides ATP to ER chaperone HSPA5 that drives protein folding and trafficking in the ER. Can transport dATP, UTP or UDP in exchange for ATP, but the physiological relevance of this process remains to be established. The chain is Solute carrier family 35 member B1 (SLC35B1) from Bos taurus (Bovine).